Consider the following 125-residue polypeptide: Holo-[acyl-carrier-protein] synthase (125 aa).

The Mg(2+) site is built by Asp8 and Glu57.

The protein belongs to the P-Pant transferase superfamily. AcpS family. It depends on Mg(2+) as a cofactor.

The protein resides in the cytoplasm. The enzyme catalyses apo-[ACP] + CoA = holo-[ACP] + adenosine 3',5'-bisphosphate + H(+). Transfers the 4'-phosphopantetheine moiety from coenzyme A to a Ser of acyl-carrier-protein. The sequence is that of Holo-[acyl-carrier-protein] synthase from Azoarcus sp. (strain BH72).